A 451-amino-acid polypeptide reads, in one-letter code: Signal transduction histidine-protein kinase ArlS (451 aa).

2 helical membrane-spanning segments follow: residues 11–31 (IIVT…IIIF) and 156–176 (IIAL…SYVF). One can recognise an HAMP domain in the interval 178-231 (TQITKPLVSLSNKMIEIRRDGFQNKLQLNTNYEEIDNLANTFNEMMSQIEESFN). The Histidine kinase domain occupies 239 to 451 (DASHELRTPL…NKGTTFKIIF (213 aa)). A Phosphohistidine; by autocatalysis modification is found at histidine 242.

Autophosphorylated.

The protein localises to the cell membrane. The enzyme catalyses ATP + protein L-histidine = ADP + protein N-phospho-L-histidine.. Member of the two-component regulatory system ArlS/ArlR involved in the regulation of adhesion, autolysis, multidrug resistance and virulence. ArlS probably functions as a sensor protein kinase which is autophosphorylated at a histidine residue and transfers its phosphate group to ArlR. The sequence is that of Signal transduction histidine-protein kinase ArlS (arlS) from Staphylococcus aureus (strain MRSA252).